A 156-amino-acid chain; its full sequence is Small ribosomal subunit protein uS7 (156 aa).

Belongs to the universal ribosomal protein uS7 family. In terms of assembly, part of the 30S ribosomal subunit. Contacts proteins S9 and S11.

One of the primary rRNA binding proteins, it binds directly to 16S rRNA where it nucleates assembly of the head domain of the 30S subunit. Is located at the subunit interface close to the decoding center, probably blocks exit of the E-site tRNA. This Acetivibrio thermocellus (strain ATCC 27405 / DSM 1237 / JCM 9322 / NBRC 103400 / NCIMB 10682 / NRRL B-4536 / VPI 7372) (Clostridium thermocellum) protein is Small ribosomal subunit protein uS7.